The chain runs to 146 residues: Large ribosomal subunit protein uL15 (146 aa).

The tract at residues 1–54 is disordered; the sequence is MKLHELQPAAGSRKAPKRVGRGTGSGLGRNAGKGEKGQNARSGGGVRPGFEGGQ. Gly residues-rich tracts occupy residues 21-31 and 42-52; these read RGTGSGLGRNA and SGGGVRPGFEG.

The protein belongs to the universal ribosomal protein uL15 family. Part of the 50S ribosomal subunit.

Binds to the 23S rRNA. This Clostridium botulinum (strain Alaska E43 / Type E3) protein is Large ribosomal subunit protein uL15.